A 199-amino-acid chain; its full sequence is Cytochrome c oxidase subunit 2 (199 aa).

Residues 1-13 (AICSLVLYLLSLM) traverse the membrane as a helical segment. The Mitochondrial matrix portion of the chain corresponds to 14-26 (LMEKLSSNTVDAQ). Residues 27 to 54 (EVELIWTILPAIVLILLALPSLQILYMM) form a helical membrane-spanning segment. Over 55 to 199 (DEIDEPDLTL…SSLLSSSSSL (145 aa)) the chain is Mitochondrial intermembrane. His128, Cys163, Glu165, Cys167, His171, and Met174 together coordinate Cu cation. A Mg(2+)-binding site is contributed by Glu165.

The protein belongs to the cytochrome c oxidase subunit 2 family. Component of the cytochrome c oxidase (complex IV, CIV), a multisubunit enzyme composed of 14 subunits. The complex is composed of a catalytic core of 3 subunits MT-CO1, MT-CO2 and MT-CO3, encoded in the mitochondrial DNA, and 11 supernumerary subunits COX4I, COX5A, COX5B, COX6A, COX6B, COX6C, COX7A, COX7B, COX7C, COX8 and NDUFA4, which are encoded in the nuclear genome. The complex exists as a monomer or a dimer and forms supercomplexes (SCs) in the inner mitochondrial membrane with NADH-ubiquinone oxidoreductase (complex I, CI) and ubiquinol-cytochrome c oxidoreductase (cytochrome b-c1 complex, complex III, CIII), resulting in different assemblies (supercomplex SCI(1)III(2)IV(1) and megacomplex MCI(2)III(2)IV(2)). Found in a complex with TMEM177, COA6, COX18, COX20, SCO1 and SCO2. Interacts with TMEM177 in a COX20-dependent manner. Interacts with COX20. Interacts with COX16. Cu cation is required as a cofactor.

The protein localises to the mitochondrion inner membrane. It catalyses the reaction 4 Fe(II)-[cytochrome c] + O2 + 8 H(+)(in) = 4 Fe(III)-[cytochrome c] + 2 H2O + 4 H(+)(out). Component of the cytochrome c oxidase, the last enzyme in the mitochondrial electron transport chain which drives oxidative phosphorylation. The respiratory chain contains 3 multisubunit complexes succinate dehydrogenase (complex II, CII), ubiquinol-cytochrome c oxidoreductase (cytochrome b-c1 complex, complex III, CIII) and cytochrome c oxidase (complex IV, CIV), that cooperate to transfer electrons derived from NADH and succinate to molecular oxygen, creating an electrochemical gradient over the inner membrane that drives transmembrane transport and the ATP synthase. Cytochrome c oxidase is the component of the respiratory chain that catalyzes the reduction of oxygen to water. Electrons originating from reduced cytochrome c in the intermembrane space (IMS) are transferred via the dinuclear copper A center (CU(A)) of subunit 2 and heme A of subunit 1 to the active site in subunit 1, a binuclear center (BNC) formed by heme A3 and copper B (CU(B)). The BNC reduces molecular oxygen to 2 water molecules using 4 electrons from cytochrome c in the IMS and 4 protons from the mitochondrial matrix. This is Cytochrome c oxidase subunit 2 (MT-CO2) from Rhea americana (Greater rhea).